A 717-amino-acid chain; its full sequence is SAGA factor-like TAF6 (717 aa).

The sufficient for interaction with Taf9 stretch occupies residues 123-204 (KSYAGFDPRS…VPPMLGAMDS (82 aa)).

This sequence belongs to the TAF6 family. As to quaternary structure, component of the Spt-Ada-Gcn5 acetyltransferase (SAGA) complex consisting of wda/Taf5L, Saf6, Taf9, Taf10b, Taf12, Ada1, Spt3, Spt7, Spt20, Sf3b3, Sf3b5, Nipped-A/Tra1, a histone acetyltransferase (HAT) module made up of Gcn5, Ada2b (Isoform B), Ada3 and Sgf29, and a deubiquitinase (DUB) module made up of not/nonstop, Sgf11 and e(y)2 tethered to SAGA by Atxn7; not essential for SAGA complex assembly, histone-modifying activity or chromosomal recruitment. Interacts (via N-terminal histone-fold domain) with Taf9 (via N-terminal histone-fold domain); the interaction is probably direct. Probably forms a histone-like heterooctamer structure with Taf9, Taf12 and Taf10b.

It is found in the nucleus. The protein resides in the chromosome. In terms of biological role, component of the transcription regulatory complex SAGA, a multiprotein complex that activates transcription by remodeling chromatin and mediating histone acetylation and deubiquitination. The SAGA complex predominantly acetylates histone H3. Involved in SAGA complex coactivator function but not essential for SAGA complex assembly, histone-modifying activity or chromosomal recruitment. Required for oogenesis; involved in transcriptional activation. The sequence is that of SAGA factor-like TAF6 from Drosophila melanogaster (Fruit fly).